The sequence spans 400 residues: Enoyl-[acyl-carrier-protein] reductase [NADH] (400 aa).

NAD(+) is bound by residues 48–53 (GSSSGY), 74–75 (FE), 111–112 (DA), and 139–140 (LA). Residue Tyr225 participates in substrate binding. Catalysis depends on Tyr235, which acts as the Proton donor. NAD(+)-binding positions include Lys244 and 273–275 (VVT).

Belongs to the TER reductase family. As to quaternary structure, monomer.

The enzyme catalyses a 2,3-saturated acyl-[ACP] + NAD(+) = a (2E)-enoyl-[ACP] + NADH + H(+). Its pathway is lipid metabolism; fatty acid biosynthesis. Involved in the final reduction of the elongation cycle of fatty acid synthesis (FAS II). Catalyzes the reduction of a carbon-carbon double bond in an enoyl moiety that is covalently linked to an acyl carrier protein (ACP). In Aliivibrio salmonicida (strain LFI1238) (Vibrio salmonicida (strain LFI1238)), this protein is Enoyl-[acyl-carrier-protein] reductase [NADH].